The following is a 235-amino-acid chain: MIYAGILAGGTGTRMGISNLPKQFLELGDRPILIHTIEKFVLEPSIEKIVVGVHGDWVSHAEDLVDKYLPLYKERIIITKGGADRNTSIKNIIEAIDAYRPLTPEDIVVTHDSVRPFITLRMIQDNIQLAQNHDAVDTVVEAVDTIVESTNGQFITDIPNRAHLYQGQTPQTFRCKDFMDLYGSLSDEEKEILTDACKIFVIKGKDVALAKGEYSNLKITTVTDLKIAKSMIEKD.

CTP-binding positions include 7–10 (LAGG), 82–88 (GADRNTS), and S113.

The protein belongs to the IspD/TarI cytidylyltransferase family. TarI subfamily.

The catalysed reaction is D-ribitol 5-phosphate + CTP + H(+) = CDP-L-ribitol + diphosphate. The protein operates within cell wall biogenesis; poly(ribitol phosphate) teichoic acid biosynthesis. Catalyzes the transfer of the cytidylyl group of CTP to D-ribitol 5-phosphate. This chain is Ribitol-5-phosphate cytidylyltransferase, found in Streptococcus pneumoniae serotype 2 (strain D39 / NCTC 7466).